The sequence spans 773 residues: ATP-dependent zinc metalloprotease YME1L1 (773 aa).

Over 1–295 (MFSLSSTVQP…TNDSLRRTRL (295 aa)) the chain is Mitochondrial matrix. A helical transmembrane segment spans residues 296–316 (ILFVLLLFGIYGLLKNPFLSV). At 317 to 773 (RFRTTTGLDS…VLEGKKLEVR (457 aa)) the chain is on the mitochondrial intermembrane side. The ATP site is built by Val341, Thr383, Gly384, Lys385, Thr386, and Leu387. Residue His599 coordinates Zn(2+). Glu600 is an active-site residue. The Zn(2+) site is built by His603 and Asp677.

It in the N-terminal section; belongs to the AAA ATPase family. In the C-terminal section; belongs to the peptidase M41 family. As to quaternary structure, homohexamer; may also form heterohexamers. Exists in several complexes of 600-1100 kDa. Interacts with AFG1L. It depends on Zn(2+) as a cofactor. In terms of processing, proteolytically processed by mitochondrial processing peptidase (MPP) to generate the mature form. Degraded in an OMA1-dependent manner in response to oxidative stress. As to expression, high expression in cardiac and skeletal muscle mitochondria.

It localises to the mitochondrion inner membrane. Its subcellular location is the mitochondrion. The catalysed reaction is ATP + H2O = ADP + phosphate + H(+). In terms of biological role, ATP-dependent metalloprotease that catalyzes the degradation of folded and unfolded proteins with a suitable degron sequence in the mitochondrial intermembrane region. Plays an important role in regulating mitochondrial morphology and function by cleaving OPA1 at position S2, giving rise to a form of OPA1 that promotes maintenance of normal mitochondrial structure and mitochondrial protein metabolism. Ensures cell proliferation, maintains normal cristae morphology and complex I respiration activity, promotes antiapoptotic activity and protects mitochondria from the accumulation of oxidatively damaged membrane proteins. Required to control the accumulation of nonassembled respiratory chain subunits (NDUFB6, OX4 and ND1). Involved in the mitochondrial adaptation in response to various signals, such as stress or developmental cues, by mediating degradation of mitochondrial proteins to rewire the mitochondrial proteome. Catalyzes degradation of mitochondrial proteins, such as translocases, lipid transfer proteins and metabolic enzymes in response to nutrient starvation in order to limit mitochondrial biogenesis: mechanistically, YME1L is activated by decreased phosphatidylethanolamine levels caused by LPIN1 activity in response to mTORC1 inhibition. Acts as a regulator of adult neural stem cell self-renewal by promoting mitochondrial proteome rewiring, preserving neural stem and progenitor cells self-renewal. Required for normal, constitutive degradation of PRELID1. Catalyzes the degradation of OMA1 in response to membrane depolarization. Mediates degradation of TIMM17A downstream of the integrated stress response (ISR). Catalyzes degradation of MICU1 when MICU1 is not assembled via an interchain disulfide. The polypeptide is ATP-dependent zinc metalloprotease YME1L1 (YME1L1) (Homo sapiens (Human)).